A 310-amino-acid chain; its full sequence is N-acetyl-gamma-glutamyl-phosphate reductase (310 aa).

Residue Cys-117 is part of the active site.

It belongs to the NAGSA dehydrogenase family. Type 2 subfamily.

The protein localises to the cytoplasm. The enzyme catalyses N-acetyl-L-glutamate 5-semialdehyde + phosphate + NADP(+) = N-acetyl-L-glutamyl 5-phosphate + NADPH + H(+). It functions in the pathway amino-acid biosynthesis; L-arginine biosynthesis; N(2)-acetyl-L-ornithine from L-glutamate: step 3/4. Catalyzes the NADPH-dependent reduction of N-acetyl-5-glutamyl phosphate to yield N-acetyl-L-glutamate 5-semialdehyde. The sequence is that of N-acetyl-gamma-glutamyl-phosphate reductase from Rhizobium etli (strain CIAT 652).